Reading from the N-terminus, the 117-residue chain is Large ribosomal subunit protein bL20 (117 aa).

It belongs to the bacterial ribosomal protein bL20 family.

Its function is as follows. Binds directly to 23S ribosomal RNA and is necessary for the in vitro assembly process of the 50S ribosomal subunit. It is not involved in the protein synthesizing functions of that subunit. The sequence is that of Large ribosomal subunit protein bL20 from Acetivibrio thermocellus (strain ATCC 27405 / DSM 1237 / JCM 9322 / NBRC 103400 / NCIMB 10682 / NRRL B-4536 / VPI 7372) (Clostridium thermocellum).